Reading from the N-terminus, the 387-residue chain is Small ribosomal subunit biogenesis GTPase RsgA (387 aa).

Residues 112-273 (YDGLKPVAAN…LIDSPGVREF (162 aa)) form the CP-type G domain. GTP is bound by residues 159–162 (NKID) and 213–221 (GQSGVGKSS). Residues cysteine 297, cysteine 302, histidine 304, and cysteine 310 each contribute to the Zn(2+) site.

The protein belongs to the TRAFAC class YlqF/YawG GTPase family. RsgA subfamily. In terms of assembly, monomer. Associates with 30S ribosomal subunit, binds 16S rRNA. The cofactor is Zn(2+).

It is found in the cytoplasm. Functionally, one of several proteins that assist in the late maturation steps of the functional core of the 30S ribosomal subunit. Helps release RbfA from mature subunits. May play a role in the assembly of ribosomal proteins into the subunit. Circularly permuted GTPase that catalyzes slow GTP hydrolysis, GTPase activity is stimulated by the 30S ribosomal subunit. The protein is Small ribosomal subunit biogenesis GTPase RsgA of Vibrio cholerae serotype O1 (strain ATCC 39315 / El Tor Inaba N16961).